We begin with the raw amino-acid sequence, 285 residues long: Ubiquinone biosynthesis protein COQ4, mitochondrial (285 aa).

The transit peptide at 1-11 (MPPAVRQGMRT) directs the protein to the mitochondrion. Zn(2+)-binding residues include His166, Asp167, His170, and Glu182.

Belongs to the COQ4 family. As to quaternary structure, component of a multi-subunit COQ enzyme complex, composed of at least COQ3, COQ4, COQ5, COQ6, COQ7 and COQ9. Zn(2+) is required as a cofactor.

It is found in the mitochondrion inner membrane. It catalyses the reaction a 4-hydroxy-3-methoxy-5-(all-trans-polyprenyl)benzoate + H(+) = a 2-methoxy-6-(all-trans-polyprenyl)phenol + CO2. Its pathway is cofactor biosynthesis; ubiquinone biosynthesis. Lyase that catalyzes the C1-decarboxylation of 4-hydroxy-3-methoxy-5-(all-trans-polyprenyl)benzoic acid into 2-methoxy-6-(all-trans-polyprenyl)phenol during ubiquinone biosynthesis. The protein is Ubiquinone biosynthesis protein COQ4, mitochondrial of Paracoccidioides lutzii (strain ATCC MYA-826 / Pb01) (Paracoccidioides brasiliensis).